The primary structure comprises 1262 residues: Isoleucine--tRNA ligase, cytoplasmic (1262 aa).

N-acetylmethionine is present on Met1. A 'HIGH' region motif is present at residues 48 to 58; it reads PFATGLPHYGH. Residues 600 to 604 carry the 'KMSKS' region motif; sequence KMSKR. Lys603 is a binding site for ATP. Residues Ser1047 and Ser1049 each carry the phosphoserine modification. Thr1058 is modified (phosphothreonine).

The protein belongs to the class-I aminoacyl-tRNA synthetase family. In terms of assembly, part of a multisubunit complex that groups tRNA ligases for Arg (RARS1), Asp (DARS1), Gln (QARS1), Ile (IARS1), Leu (LARS1), Lys (KARS1), Met (MARS1) the bifunctional ligase for Glu and Pro (EPRS1) and the auxiliary subunits AIMP1/p43, AIMP2/p38 and EEF1E1/p18. As to expression, expressed in liver and muscle (at protein level).

It is found in the cytoplasm. The protein localises to the cytosol. It carries out the reaction tRNA(Ile) + L-isoleucine + ATP = L-isoleucyl-tRNA(Ile) + AMP + diphosphate. Its function is as follows. Catalyzes the specific attachment of an amino acid to its cognate tRNA in a 2 step reaction: the amino acid (AA) is first activated by ATP to form AA-AMP and then transferred to the acceptor end of the tRNA. This is Isoleucine--tRNA ligase, cytoplasmic from Homo sapiens (Human).